Here is a 492-residue protein sequence, read N- to C-terminus: Ribose import ATP-binding protein RbsA (492 aa).

ABC transporter domains lie at 3-239 (IDMR…VGRK) and 238-492 (RKLE…TGGK). 35-42 (GENGAGKS) contributes to the ATP binding site.

The protein belongs to the ABC transporter superfamily. Ribose importer (TC 3.A.1.2.1) family. As to quaternary structure, the complex is composed of an ATP-binding protein (RbsA), two transmembrane proteins (RbsC) and a solute-binding protein (RbsB).

The protein resides in the cell membrane. It catalyses the reaction D-ribose(out) + ATP + H2O = D-ribose(in) + ADP + phosphate + H(+). Functionally, part of the ABC transporter complex RbsABC involved in ribose import. Responsible for energy coupling to the transport system. This Streptococcus agalactiae serotype V (strain ATCC BAA-611 / 2603 V/R) protein is Ribose import ATP-binding protein RbsA.